Here is a 195-residue protein sequence, read N- to C-terminus: Holliday junction branch migration complex subunit RuvA (195 aa).

The domain I stretch occupies residues 1 to 64 (MIKGVEGEIT…DRAPEIYGFK (64 aa)). Residues 65–137 (DRAEYNVFLM…LYDLVKDYAV (73 aa)) form a domain II region. The segment at 137–141 (VEFPK) is flexible linker. Positions 142–195 (ELSDVSEDAVGALTALGFDMTSAKLAVNEVLKEQTVENTQELVRKALRKLNKTR) are domain III.

It belongs to the RuvA family. In terms of assembly, homotetramer. Forms an RuvA(8)-RuvB(12)-Holliday junction (HJ) complex. HJ DNA is sandwiched between 2 RuvA tetramers; dsDNA enters through RuvA and exits via RuvB. An RuvB hexamer assembles on each DNA strand where it exits the tetramer. Each RuvB hexamer is contacted by two RuvA subunits (via domain III) on 2 adjacent RuvB subunits; this complex drives branch migration. In the full resolvosome a probable DNA-RuvA(4)-RuvB(12)-RuvC(2) complex forms which resolves the HJ.

The protein resides in the cytoplasm. Functionally, the RuvA-RuvB-RuvC complex processes Holliday junction (HJ) DNA during genetic recombination and DNA repair, while the RuvA-RuvB complex plays an important role in the rescue of blocked DNA replication forks via replication fork reversal (RFR). RuvA specifically binds to HJ cruciform DNA, conferring on it an open structure. The RuvB hexamer acts as an ATP-dependent pump, pulling dsDNA into and through the RuvAB complex. HJ branch migration allows RuvC to scan DNA until it finds its consensus sequence, where it cleaves and resolves the cruciform DNA. The chain is Holliday junction branch migration complex subunit RuvA from Kosmotoga olearia (strain ATCC BAA-1733 / DSM 21960 / TBF 19.5.1).